A 414-amino-acid chain; its full sequence is Serine hydroxymethyltransferase (414 aa).

Residues Leu118 and 122–124 (GHL) each bind (6S)-5,6,7,8-tetrahydrofolate. Lys226 carries the N6-(pyridoxal phosphate)lysine modification. Position 353 to 355 (353 to 355 (SPF)) interacts with (6S)-5,6,7,8-tetrahydrofolate.

It belongs to the SHMT family. As to quaternary structure, homodimer. Requires pyridoxal 5'-phosphate as cofactor.

The protein resides in the cytoplasm. The catalysed reaction is (6R)-5,10-methylene-5,6,7,8-tetrahydrofolate + glycine + H2O = (6S)-5,6,7,8-tetrahydrofolate + L-serine. It participates in one-carbon metabolism; tetrahydrofolate interconversion. The protein operates within amino-acid biosynthesis; glycine biosynthesis; glycine from L-serine: step 1/1. In terms of biological role, catalyzes the reversible interconversion of serine and glycine with tetrahydrofolate (THF) serving as the one-carbon carrier. This reaction serves as the major source of one-carbon groups required for the biosynthesis of purines, thymidylate, methionine, and other important biomolecules. Also exhibits THF-independent aldolase activity toward beta-hydroxyamino acids, producing glycine and aldehydes, via a retro-aldol mechanism. The polypeptide is Serine hydroxymethyltransferase (Blochmanniella floridana).